The following is a 166-amino-acid chain: Regulatory protein RecX (166 aa).

This sequence belongs to the RecX family.

It localises to the cytoplasm. Modulates RecA activity. This is Regulatory protein RecX from Shigella dysenteriae serotype 1 (strain Sd197).